The primary structure comprises 418 residues: Gamma-glutamyl phosphate reductase (418 aa).

It belongs to the gamma-glutamyl phosphate reductase family.

Its subcellular location is the cytoplasm. It catalyses the reaction L-glutamate 5-semialdehyde + phosphate + NADP(+) = L-glutamyl 5-phosphate + NADPH + H(+). Its pathway is amino-acid biosynthesis; L-proline biosynthesis; L-glutamate 5-semialdehyde from L-glutamate: step 2/2. Its function is as follows. Catalyzes the NADPH-dependent reduction of L-glutamate 5-phosphate into L-glutamate 5-semialdehyde and phosphate. The product spontaneously undergoes cyclization to form 1-pyrroline-5-carboxylate. The protein is Gamma-glutamyl phosphate reductase of Thermodesulfovibrio yellowstonii (strain ATCC 51303 / DSM 11347 / YP87).